Reading from the N-terminus, the 474-residue chain is tRNA-2-methylthio-N(6)-dimethylallyladenosine synthase (474 aa).

The MTTase N-terminal domain occupies 3-120; that stretch reads KKLLIKTWGC…LPEMIRQSQS (118 aa). The [4Fe-4S] cluster site is built by Cys-12, Cys-49, Cys-83, Cys-157, Cys-161, and Cys-164. One can recognise a Radical SAM core domain in the interval 143–375; sequence KAEGATAFVS…QQQVNSQAMR (233 aa). Positions 378–441 constitute a TRAM domain; the sequence is RLMLDTEQRV…ANSLRGELVR (64 aa).

It belongs to the methylthiotransferase family. MiaB subfamily. Monomer. It depends on [4Fe-4S] cluster as a cofactor.

It is found in the cytoplasm. It catalyses the reaction N(6)-dimethylallyladenosine(37) in tRNA + (sulfur carrier)-SH + AH2 + 2 S-adenosyl-L-methionine = 2-methylsulfanyl-N(6)-dimethylallyladenosine(37) in tRNA + (sulfur carrier)-H + 5'-deoxyadenosine + L-methionine + A + S-adenosyl-L-homocysteine + 2 H(+). Catalyzes the methylthiolation of N6-(dimethylallyl)adenosine (i(6)A), leading to the formation of 2-methylthio-N6-(dimethylallyl)adenosine (ms(2)i(6)A) at position 37 in tRNAs that read codons beginning with uridine. The sequence is that of tRNA-2-methylthio-N(6)-dimethylallyladenosine synthase from Aliivibrio fischeri (strain ATCC 700601 / ES114) (Vibrio fischeri).